The following is a 150-amino-acid chain: Putative FAD-linked sulfhydryl oxidase 088R (150 aa).

The region spanning 24-128 (GPFGPSGFGP…VTLQKAICIY (105 aa)) is the ERV/ALR sulfhydryl oxidase domain. The cysteines at positions 74 and 77 are disulfide-linked.

FAD serves as cofactor.

It catalyses the reaction 2 R'C(R)SH + O2 = R'C(R)S-S(R)CR' + H2O2. Functionally, FAD-dependent sulfhydryl oxidase that catalyzes disulfide bond formation. The sequence is that of Putative FAD-linked sulfhydryl oxidase 088R from Dryophytes versicolor (chameleon treefrog).